The sequence spans 377 residues: Phosphatidylserine decarboxylase proenzyme, mitochondrial (377 aa).

The transit peptide at 1-34 directs the protein to the mitochondrion; sequence MMPLFNVLRSARMLPAVSKKVVSPPMMLRSVREL. At 35–61 the chain is on the mitochondrial matrix side; that stretch reads TNQSKNVYATKEVIIGASQKKKRSWVK. The helical transmembrane segment at 62-80 threads the bilayer; sequence WLSVSTLIIGGASYVGYLF. The Mitochondrial intermembrane portion of the chain corresponds to 81–377; it reads TPDWREIVDS…YGQSLVADGV (297 aa). Active-site charge relay system; for autoendoproteolytic cleavage activity residues include Asp181, His238, and Ser344. The Schiff-base intermediate with substrate; via pyruvic acid; for decarboxylase activity role is filled by Ser344. Position 344 is a pyruvic acid (Ser); by autocatalysis (Ser344).

The protein belongs to the phosphatidylserine decarboxylase family. PSD-B subfamily. Eukaryotic type I sub-subfamily. In terms of assembly, heterodimer of a large membrane-associated beta subunit and a small pyruvoyl-containing alpha subunit. The cofactor is pyruvate. Post-translationally, is synthesized initially as an inactive proenzyme. Formation of the active enzyme involves a self-maturation process in which the active site pyruvoyl group is generated from an internal serine residue via an autocatalytic post-translational modification. Two non-identical subunits are generated from the proenzyme in this reaction, and the pyruvate is formed at the N-terminus of the alpha chain, which is derived from the carboxyl end of the proenzyme. The autoendoproteolytic cleavage occurs by a canonical serine protease mechanism, in which the side chain hydroxyl group of the serine supplies its oxygen atom to form the C-terminus of the beta chain, while the remainder of the serine residue undergoes an oxidative deamination to produce ammonia and the pyruvoyl prosthetic group on the alpha chain. During this reaction, the Ser that is part of the protease active site of the proenzyme becomes the pyruvoyl prosthetic group, which constitutes an essential element of the active site of the mature decarboxylase.

The protein localises to the mitochondrion inner membrane. It catalyses the reaction a 1,2-diacyl-sn-glycero-3-phospho-L-serine + H(+) = a 1,2-diacyl-sn-glycero-3-phosphoethanolamine + CO2. It participates in phospholipid metabolism; phosphatidylethanolamine biosynthesis; phosphatidylethanolamine from CDP-diacylglycerol: step 2/2. Functionally, catalyzes the formation of phosphatidylethanolamine (PtdEtn) from phosphatidylserine (PtdSer). Plays a central role in phospholipid metabolism and in the interorganelle trafficking of phosphatidylserine. The sequence is that of Phosphatidylserine decarboxylase proenzyme, mitochondrial from Caenorhabditis elegans.